The following is a 637-amino-acid chain: Serine/threonine-protein kinase Nek11 (637 aa).

A Protein kinase domain is found at 29 to 287; that stretch reads YVLQQKLGSG…AIEILKIPYI (259 aa). Residues 35–43 and Lys61 each bind ATP; that span reads LGSGSFGTV. Asp158 serves as the catalytic Proton acceptor. Ser273 carries the post-translational modification Phosphoserine; by CHEK1. The stretch at 302-385 forms a coiled coil; that stretch reads TLEDKNLDCQ…QELRSRNFQQ (84 aa). The tract at residues 399–446 is disordered; sequence GMEEKEEQPEGRPSCSPQDEDEERWQDREEEFDEPTLENLSEPQPIPS. Residues 416 to 434 show a composition bias toward acidic residues; the sequence is QDEDEERWQDREEEFDEPT.

Belongs to the protein kinase superfamily. NEK Ser/Thr protein kinase family. NIMA subfamily. Interacts with NEK2. Mn(2+) is required as a cofactor. Mg(2+) serves as cofactor. Phosphorylated by NEK2. Phosphorylation at Ser-273 is important for its activation.

Its subcellular location is the nucleus. The protein localises to the nucleolus. The enzyme catalyses L-seryl-[protein] + ATP = O-phospho-L-seryl-[protein] + ADP + H(+). It carries out the reaction L-threonyl-[protein] + ATP = O-phospho-L-threonyl-[protein] + ADP + H(+). With respect to regulation, autorepressed by intramolecular binding of the C-terminus which dissociates following phosphorylation by NEK2. Activated in response to DNA damage. Inhibited by zinc. In terms of biological role, protein kinase which plays an important role in the G2/M checkpoint response to DNA damage. Controls degradation of CDC25A by directly phosphorylating it on residues whose phosphorylation is required for BTRC-mediated polyubiquitination and degradation. The polypeptide is Serine/threonine-protein kinase Nek11 (NEK11) (Macaca fascicularis (Crab-eating macaque)).